Here is a 602-residue protein sequence, read N- to C-terminus: Glutamine--fructose-6-phosphate aminotransferase [isomerizing] (602 aa).

Cys-2 functions as the Nucleophile; for GATase activity in the catalytic mechanism. One can recognise a Glutamine amidotransferase type-2 domain in the interval 2–217; that stretch reads CGIVGVVGNT…DQELVIVKAD (216 aa). The disordered stretch occupies residues 67 to 87; sequence IGHTRWATHGKPTEDNAHPHR. Over residues 77–87 the composition is skewed to basic and acidic residues; sequence KPTEDNAHPHR. SIS domains follow at residues 283–422 and 455–592; these read IIKA…ANGN and VREL…VDKP. Residue Lys-597 is the For Fru-6P isomerization activity of the active site.

In terms of assembly, homodimer.

It localises to the cytoplasm. It catalyses the reaction D-fructose 6-phosphate + L-glutamine = D-glucosamine 6-phosphate + L-glutamate. Its function is as follows. Catalyzes the first step in hexosamine metabolism, converting fructose-6P into glucosamine-6P using glutamine as a nitrogen source. The sequence is that of Glutamine--fructose-6-phosphate aminotransferase [isomerizing] from Streptococcus pneumoniae (strain ATCC BAA-255 / R6).